A 296-amino-acid polypeptide reads, in one-letter code: tRNA dimethylallyltransferase (296 aa).

An ATP-binding site is contributed by 2–9 (GPTASGKT). 4-9 (TASGKT) is a binding site for substrate. 3 interaction with substrate tRNA regions span residues 27-30 (DSAL), 151-155 (QRLSR), and 232-237 (RCVGYR).

Belongs to the IPP transferase family. In terms of assembly, monomer. Mg(2+) is required as a cofactor.

The enzyme catalyses adenosine(37) in tRNA + dimethylallyl diphosphate = N(6)-dimethylallyladenosine(37) in tRNA + diphosphate. Its function is as follows. Catalyzes the transfer of a dimethylallyl group onto the adenine at position 37 in tRNAs that read codons beginning with uridine, leading to the formation of N6-(dimethylallyl)adenosine (i(6)A). This is tRNA dimethylallyltransferase from Shewanella frigidimarina (strain NCIMB 400).